We begin with the raw amino-acid sequence, 223 residues long: Uracil-DNA glycosylase (223 aa).

Residue Asp-64 is the Proton acceptor of the active site.

This sequence belongs to the uracil-DNA glycosylase (UDG) superfamily. UNG family.

It localises to the cytoplasm. It carries out the reaction Hydrolyzes single-stranded DNA or mismatched double-stranded DNA and polynucleotides, releasing free uracil.. Excises uracil residues from the DNA which can arise as a result of misincorporation of dUMP residues by DNA polymerase or due to deamination of cytosine. The polypeptide is Uracil-DNA glycosylase (Desulfitobacterium hafniense (strain DSM 10664 / DCB-2)).